The following is a 108-amino-acid chain: DNA-directed RNA polymerase III subunit RPC10 (108 aa).

Positions 5, 8, 25, 28, 69, and 72 each coordinate Zn(2+). A C4-type zinc finger spans residues Cys5–Cys28. The segment at Thr65–Arg107 adopts a TFIIS-type zinc-finger fold. The short motif at Asp88 to Glu89 is the Hairpin element. Residues Cys98 and Cys102 each contribute to the Zn(2+) site.

Belongs to the archaeal RpoM/eukaryotic RPA12/RPB9/RPC11 RNA polymerase family. Component of the RNA polymerase III complex consisting of 17 subunits: a ten-subunit horseshoe-shaped catalytic core composed of POLR3A/RPC1, POLR3B/RPC2, POLR1C/RPAC1, POLR1D/RPAC2, POLR3K/RPC10, POLR2E/RPABC1, POLR2F/RPABC2, POLR2H/RPABC3, POLR2K/RPABC4 and POLR2L/RPABC5; a mobile stalk composed of two subunits POLR3H/RPC8 and CRCP/RPC9, protruding from the core and functioning primarily in transcription initiation; and additional subunits homologous to general transcription factors of the RNA polymerase II machinery, POLR3C/RPC3-POLR3F/RPC6-POLR3G/RPC7 heterotrimer required for transcription initiation and POLR3D/RPC4-POLR3E/RPC5 heterodimer involved in both transcription initiation and termination.

The protein resides in the nucleus. In terms of biological role, core component of RNA polymerase III (Pol III) which synthesizes small non-coding RNAs using the four ribonucleoside triphosphates as substrates. Can mediate Pol I proofreading of the nascent RNA transcript. Anchors into the Pol III active site to constantly monitor transcription fidelity, cleaves mis-incorporated 5'-ribonucleotides and restarts the transcription process. Once Pol III reaches the poly(dT) termination signal, can induce Pol III clamp opening and transcription termination. Pol III plays an important role in sensing and limiting infection by intracellular bacteria and DNA viruses. Acts as a nuclear and cytosolic DNA sensor involved in innate immune response. Can sense non-self dsDNA that serves as template for transcription into dsRNA. The non-self RNA polymerase III transcripts, such as Epstein-Barr virus-encoded RNAs (EBERs) induce type I interferon and NF-kappa-B through the RIG-I pathway. The chain is DNA-directed RNA polymerase III subunit RPC10 from Mus musculus (Mouse).